The chain runs to 309 residues: Dermonecrotic toxin LarSicTox-alphaIB2bi (309 aa).

V1 is a signal peptide. A propeptide spanning residues 2–27 (RATEKFAPIYFFCHPLQSAETDVAER) is cleaved from the precursor. H38 is a catalytic residue. Mg(2+)-binding residues include E58 and D60. H74 serves as the catalytic Nucleophile. 2 cysteine pairs are disulfide-bonded: C78–C84 and C80–C223. D118 provides a ligand contact to Mg(2+). N-linked (GlcNAc...) asparagine glycosylation occurs at N286.

It belongs to the arthropod phospholipase D family. Class II subfamily. Mg(2+) is required as a cofactor. Expressed by the venom gland.

The protein resides in the secreted. It catalyses the reaction an N-(acyl)-sphingosylphosphocholine = an N-(acyl)-sphingosyl-1,3-cyclic phosphate + choline. It carries out the reaction N-hexanoyl-sphing-4-enine-1-phosphocholine = N-(hexanoyl)-sphing-4-enine-1,3-cyclic phosphate + choline. The enzyme catalyses N-(dodecanoyl)-sphing-4-enine-1-phosphocholine = N-dodecanoyl-sphing-4-enine-1,3-cyclic phosphate + choline. The catalysed reaction is a 1-acyl-sn-glycero-3-phosphocholine = a 1-acyl-sn-glycero-2,3-cyclic phosphate + choline. It catalyses the reaction 1-tetradecanoyl-sn-glycero-3-phosphocholine = 1-tetradecanoyl-sn-glycero-2,3-cyclic phosphate + choline. It carries out the reaction 1-octanoyl-sn-glycero-3-phosphocholine = 1-octanoyl-sn-glycero-2,3-cyclic phosphate + choline. The enzyme catalyses 1-hexadecanoyl-sn-glycero-3-phosphocholine = 1-hexadecanoyl-sn-glycero-2,3-cyclic phosphate + choline. The catalysed reaction is an N-(acyl)-sphingosylphosphoethanolamine = an N-(acyl)-sphingosyl-1,3-cyclic phosphate + ethanolamine. It catalyses the reaction N-dodecanoyl-heptadecasphing-4-enine-1-phosphoethanolamine = N-dodecanoyl-heptadecasphing-4-enine-1,3-cyclic phosphate + ethanolamine. In terms of biological role, dermonecrotic toxins cleave the phosphodiester linkage between the phosphate and headgroup of certain phospholipids (sphingolipid and lysolipid substrates), forming an alcohol (often choline) and a cyclic phosphate. This toxin acts on sphingomyelin (SM) with high activity and on lysophosphatidylcholine (LPC) and ceramide phosphoethanolamine (CPE) with low activity. In vivo, shows potent insecticidal activities. On mammals, induces dermonecrosis, hemolysis, increased vascular permeability, edema, inflammatory response, and platelet aggregation. The polypeptide is Dermonecrotic toxin LarSicTox-alphaIB2bi (Loxosceles arizonica (Arizona brown spider)).